Here is a 162-residue protein sequence, read N- to C-terminus: UPF0114 protein Pput_0713 (162 aa).

The next 4 membrane-spanning stretches (helical) occupy residues 15 to 35, 53 to 73, 109 to 126, and 136 to 156; these read LLAPIYFGLSLGLLALALKFF, LILVILSLIDMSLVGGLLVMV, VAASIVAISSIHLLRVFM, and LMWYVIIHMTFVVSAFCMGYL.

Belongs to the UPF0114 family.

It is found in the cell membrane. The chain is UPF0114 protein Pput_0713 from Pseudomonas putida (strain ATCC 700007 / DSM 6899 / JCM 31910 / BCRC 17059 / LMG 24140 / F1).